The chain runs to 410 residues: Voltage-dependent chloride channel 2, chloroplastic (410 aa).

Residues 1–110 (MYQSMNLSFS…RHVSSSPSSR (110 aa)) are Lumenal, thylakoid-facing. Residues 111–131 (VILSLIPPVFFFTTVAILIAG) traverse the membrane as a helical segment. Residues 132-147 (YNSAVDLDWLPDFFPV) lie on the Stromal side of the membrane. The helical transmembrane segment at 148 to 168 (LRASPLPYQLTAPALALLLVF) threads the bilayer. The Lumenal, thylakoid segment spans residues 169 to 315 (RTEASYSRFE…PLSYTRLTSR (147 aa)). A run of 2 helical transmembrane segments spans residues 316-336 (FLVLWHLTLPVILWDDCHWNV) and 337-357 (VPATFISAASLFCIEEVGVLI). Over 358–410 (EEPFSMLALDELCAMVLSNSDEAVESKEVIRNRIIAKKRILEIKHSSNGWHKS) the chain is Lumenal, thylakoid.

It belongs to the anion channel-forming bestrophin (TC 1.A.46) family. Voltage-dependent chloride channel subfamily. In terms of tissue distribution, mostly expressed in flowers and, to a lower extent, in leaves, stems and roots.

The protein resides in the plastid. Its subcellular location is the chloroplast thylakoid membrane. It carries out the reaction chloride(in) = chloride(out). In terms of biological role, voltage-dependent chloride (Cl) channel probably contributing to proton motive force (PMF) partitioning across the thylakoid membrane by anion influx into the lumen. Influences thylakoid ultrastructure, including lumen size and organization. The polypeptide is Voltage-dependent chloride channel 2, chloroplastic (Arabidopsis thaliana (Mouse-ear cress)).